The chain runs to 385 residues: Period circadian protein (385 aa).

Disordered stretches follow at residues 28–121, 169–189, and 322–351; these read TAPV…VPPV, GPGP…WEGE, and SPAS…TSQG. The span at 71–93 shows a compositional bias: low complexity; that stretch reads SGNFTTGSNLHMSSVTNTSNAGT. A compositionally biased stretch (gly residues) spans 94–115; it reads GTSGTGNSGDGGGGGAGDGPGS. A compositionally biased stretch (polar residues) spans 340–351; that stretch reads HPSSEQPSTSQG.

As to quaternary structure, forms a heterodimer with timeless (TIM); the complex then translocates into the nucleus. Phosphorylated with a circadian rhythmicity, probably by the double-time protein (dbt). Phosphorylation could be implicated in the stability of per monomer and in the formation of heterodimer per-tim.

The protein resides in the nucleus. The protein localises to the cytoplasm. It is found in the perinuclear region. Functionally, essential for biological clock functions. Determines the period length of circadian and ultradian rhythms; an increase in PER dosage leads to shortened circadian rhythms and a decrease leads to lengthened circadian rhythms. Essential for the circadian rhythmicity of locomotor activity, eclosion behavior, and for the rhythmic component of the male courtship song that originates in the thoracic nervous system. The biological cycle depends on the rhythmic formation and nuclear localization of the TIM-PER complex. Light induces the degradation of TIM, which promotes elimination of PER. Nuclear activity of the heterodimer coordinatively regulates PER and TIM transcription through a negative feedback loop. Behaves as a negative element in circadian transcriptional loop. Does not appear to bind DNA, suggesting indirect transcriptional inhibition. The protein is Period circadian protein (per) of Drosophila nebulosa (Fruit fly).